Here is a 718-residue protein sequence, read N- to C-terminus: Catalase-peroxidase (718 aa).

The segment at residues 92 to 220 (WHAAGTYRTA…LASVMMGLIY (129 aa)) is a cross-link (tryptophyl-tyrosyl-methioninium (Trp-Tyr) (with M-246)). Residue H93 is the Proton acceptor of the active site. The segment at residues 220–246 (YVNPEGVDGHPDPLKTANDVRVTFERM) is a cross-link (tryptophyl-tyrosyl-methioninium (Tyr-Met) (with W-92)). Heme b is bound at residue H261.

It belongs to the peroxidase family. Peroxidase/catalase subfamily. As to quaternary structure, homodimer or homotetramer. The cofactor is heme b. In terms of processing, formation of the three residue Trp-Tyr-Met cross-link is important for the catalase, but not the peroxidase activity of the enzyme.

It catalyses the reaction H2O2 + AH2 = A + 2 H2O. The catalysed reaction is 2 H2O2 = O2 + 2 H2O. In terms of biological role, bifunctional enzyme with both catalase and broad-spectrum peroxidase activity. The protein is Catalase-peroxidase of Shewanella halifaxensis (strain HAW-EB4).